Consider the following 617-residue polypeptide: Prothrombin (617 aa).

The signal sequence occupies residues 1 to 24 (MLHVRGLGLPGCLALAALASLVHS). Positions 25-43 (QHVFLAPQQALSLLQRVRR) are excised as a propeptide. A Gla domain is found at 44–90 (ANSGFLEELRKGNLERECVEEQCSYEEAFEALESPQDTDVFWAKYTV). 10 positions are modified to 4-carboxyglutamate: Glu50, Glu51, Glu58, Glu60, Glu63, Glu64, Glu69, Glu70, Glu73, and Glu76. A disulfide bridge connects residues Cys61 and Cys66. 10 cysteine pairs are disulfide-bonded: Cys91-Cys104, Cys109-Cys187, Cys130-Cys170, Cys158-Cys182, Cys215-Cys292, Cys236-Cys276, Cys264-Cys287, Cys332-Cys478, Cys387-Cys403, and Cys532-Cys546. 2 Kringle domains span residues 109-187 (CAMD…IPVC) and 215-292 (CLLE…LNYC). 2 N-linked (GlcNAc...) asparagine glycosylation sites follow: Asn120 and Asn144. Positions 360–614 (IVEGWDAEKG…LKRWMQKVID (255 aa)) constitute a Peptidase S1 domain. His402 serves as the catalytic Charge relay system. The N-linked (GlcNAc...) asparagine glycan is linked to Asn412. The Charge relay system role is filled by Asp458. Positions 547–569 (AGFKVNDTKRGDACEGDSGGPFV) are high affinity receptor-binding region which is also known as the TP508 peptide. An N-linked (GlcNAc...) asparagine glycan is attached at Asn552. Residues Cys560 and Cys590 are joined by a disulfide bond. The Charge relay system role is filled by Ser564.

The protein belongs to the peptidase S1 family. In terms of assembly, heterodimer (named alpha-thrombin) of a light and a heavy chain; disulfide-linked. Forms a heterodimer with SERPINA5. In plasma, interacts (via N-terminus) with alpha-1-microglobulin; this interaction does not prevent the activation of prothrombin to thrombin. Post-translationally, the gamma-carboxyglutamyl residues, which bind calcium ions, result from the carboxylation of glutamyl residues by a microsomal enzyme, the vitamin K-dependent carboxylase. The modified residues are necessary for the calcium-dependent interaction with a negatively charged phospholipid surface, which is essential for the conversion of prothrombin to thrombin. In terms of processing, in the penultimate step of the coagulation cascade, prothrombin is converted to thrombin by the prothrombinase complex composed of factor Xa (F10), cofactor Va (F5), and phospholipids. This activation requires factor Xa-catalyzed sequential cleavage at 2 sites, Arg-310 and Arg-359, along 2 possible pathways. In the first pathway, the first cleavage occurs at Arg-310, leading to the formation of the inactive intermediate prethrombin-2. This pathway preferentially occurs on platelets and in the absence of cofactor Va. In the second pathway, the first cleavage occurs at Arg-359, which separates protease domain into 2 chains that remain connected through a disulfide bond and generates the active intermediate meizothrombin. The presence of cofactor Va directs activation along the meizothrombin pathway and greatly accelerates the rate of cleavage at Arg-359, but has a smaller effect on the cleavage of meizothrombin at Arg-310. Meizothrombin accumulates as an intermediate when prothrombinase is assembled on the membrane of red blood cells.

The catalysed reaction is Selective cleavage of Arg-|-Gly bonds in fibrinogen to form fibrin and release fibrinopeptides A and B.. Its activity is regulated as follows. Activity is promoted in the presence of negatively charged surfaces, such as polyphosphate and dextran sulfate. Inhibited by SERPINA5. Thrombin, which cleaves bonds after Arg and Lys, converts fibrinogen to fibrin and activates factors V, VII, VIII, XIII, and, in complex with thrombomodulin, protein C. Functions in blood homeostasis, inflammation and wound healing. Activates coagulation factor XI (F11); activation is promoted by the contact with negatively charged surfaces. Triggers the production of pro-inflammatory cytokines, such as MCP-1/CCL2 and IL8/CXCL8, in endothelial cells. The polypeptide is Prothrombin (F2) (Rattus norvegicus (Rat)).